Here is an 89-residue protein sequence, read N- to C-terminus: Large ribosomal subunit protein bL31B (89 aa).

Belongs to the bacterial ribosomal protein bL31 family. Type B subfamily. As to quaternary structure, part of the 50S ribosomal subunit.

This chain is Large ribosomal subunit protein bL31B, found in Corynebacterium urealyticum (strain ATCC 43042 / DSM 7109).